The primary structure comprises 266 residues: Tryptophan synthase alpha chain (266 aa).

Catalysis depends on proton acceptor residues glutamate 49 and aspartate 60.

Belongs to the TrpA family. Tetramer of two alpha and two beta chains.

The catalysed reaction is (1S,2R)-1-C-(indol-3-yl)glycerol 3-phosphate + L-serine = D-glyceraldehyde 3-phosphate + L-tryptophan + H2O. The protein operates within amino-acid biosynthesis; L-tryptophan biosynthesis; L-tryptophan from chorismate: step 5/5. The alpha subunit is responsible for the aldol cleavage of indoleglycerol phosphate to indole and glyceraldehyde 3-phosphate. This Chloroflexus aurantiacus (strain ATCC 29364 / DSM 637 / Y-400-fl) protein is Tryptophan synthase alpha chain.